An 80-amino-acid polypeptide reads, in one-letter code: Clavanin-A (80 aa).

The first 19 residues, Met-1 to Ser-19, serve as a signal peptide directing secretion. A propeptide spanning residues Leu-20–Lys-29 is cleaved from the precursor. At Phe-52 the chain carries Phenylalanine amide. Residues Asp-54–Gln-80 constitute a propeptide that is removed on maturation.

Its subcellular location is the secreted. Functionally, has antimicrobial activity. The sequence is that of Clavanin-A from Styela clava (Sea squirt).